The chain runs to 137 residues: Small ribosomal subunit protein uS11 (137 aa).

Over residues 1–10 the composition is skewed to polar residues; it reads MPPKSRSTGP. Disordered stretches follow at residues 1–27 and 116–137; these read MPPK…IPHG and GTIS…RRRV. Basic residues predominate over residues 12–21; it reads KTQKTRRRDK.

Belongs to the universal ribosomal protein uS11 family. Part of the 30S ribosomal subunit. Interacts with proteins S7 and S18. Binds to IF-3.

Functionally, located on the platform of the 30S subunit, it bridges several disparate RNA helices of the 16S rRNA. Forms part of the Shine-Dalgarno cleft in the 70S ribosome. The polypeptide is Small ribosomal subunit protein uS11 (Rhodococcus erythropolis (strain PR4 / NBRC 100887)).